A 627-amino-acid chain; its full sequence is 1-deoxy-D-xylulose-5-phosphate synthase (627 aa).

Residues His-87 and 128 to 130 (GHS) each bind thiamine diphosphate. Asp-159 lines the Mg(2+) pocket. Thiamine diphosphate is bound by residues 160 to 161 (GA), Asn-188, Phe-295, and Glu-375. Asn-188 contacts Mg(2+).

It belongs to the transketolase family. DXPS subfamily. As to quaternary structure, homodimer. The cofactor is Mg(2+). Thiamine diphosphate is required as a cofactor.

The enzyme catalyses D-glyceraldehyde 3-phosphate + pyruvate + H(+) = 1-deoxy-D-xylulose 5-phosphate + CO2. It functions in the pathway metabolic intermediate biosynthesis; 1-deoxy-D-xylulose 5-phosphate biosynthesis; 1-deoxy-D-xylulose 5-phosphate from D-glyceraldehyde 3-phosphate and pyruvate: step 1/1. In terms of biological role, catalyzes the acyloin condensation reaction between C atoms 2 and 3 of pyruvate and glyceraldehyde 3-phosphate to yield 1-deoxy-D-xylulose-5-phosphate (DXP). This chain is 1-deoxy-D-xylulose-5-phosphate synthase, found in Pseudomonas paraeruginosa (strain DSM 24068 / PA7) (Pseudomonas aeruginosa (strain PA7)).